Consider the following 432-residue polypeptide: Adenosine 3'-phospho 5'-phosphosulfate transporter 1 (432 aa).

9 helical membrane passes run 5–25, 40–60, 109–129, 154–174, 238–258, 265–285, 299–319, 353–373, and 387–407; these read WWAV…ETPE, VVNA…VQYF, ALKL…WGVL, FLVL…CVLC, WEYL…LSSG, PATT…DSFT, SVQM…GSLL, LFIF…IMTL, and GHTV…ALLL. S427 bears the Phosphoserine mark.

It belongs to the nucleotide-sugar transporter family. SLC35B subfamily.

It is found in the golgi apparatus membrane. The catalysed reaction is 3'-phosphoadenylyl sulfate(in) + adenosine 3',5'-bisphosphate(out) = 3'-phosphoadenylyl sulfate(out) + adenosine 3',5'-bisphosphate(in). In terms of biological role, probably functions as a 3'-phosphoadenylyl sulfate:adenosine 3',5'-bisphosphate antiporter at the Golgi membranes. Mediates the transport from the cytosol into the lumen of the Golgi of 3'-phosphoadenylyl sulfate/adenosine 3'-phospho 5'-phosphosulfate (PAPS), a universal sulfuryl donor for sulfation events that take place in that compartment. This is Adenosine 3'-phospho 5'-phosphosulfate transporter 1 from Pongo abelii (Sumatran orangutan).